The following is a 329-amino-acid chain: Ribosomal RNA small subunit methyltransferase H (329 aa).

S-adenosyl-L-methionine-binding positions include 34–36 (GGH), Asp59, Phe86, Asp112, and Gln119.

The protein belongs to the methyltransferase superfamily. RsmH family.

It is found in the cytoplasm. The catalysed reaction is cytidine(1402) in 16S rRNA + S-adenosyl-L-methionine = N(4)-methylcytidine(1402) in 16S rRNA + S-adenosyl-L-homocysteine + H(+). Its function is as follows. Specifically methylates the N4 position of cytidine in position 1402 (C1402) of 16S rRNA. In Chlorobium phaeobacteroides (strain DSM 266 / SMG 266 / 2430), this protein is Ribosomal RNA small subunit methyltransferase H.